The chain runs to 742 residues: Zinc transporter ZIP6 (742 aa).

The Extracellular portion of the chain corresponds to 1-353 (MMTFLCTRSG…QRNTPVYIAW (353 aa)). 2 N-linked (GlcNAc...) asparagine glycosylation sites follow: asparagine 94 and asparagine 127. Disordered stretches follow at residues 148–182 (PVTT…SQSD) and 191–210 (MNQE…RSRR). Over residues 152 to 165 (KKGDMDHSVEKSDP) the composition is skewed to basic and acidic residues. Positions 192–206 (NQESTTALTTPSYVT) are enriched in polar residues. 3 N-linked (GlcNAc...) asparagine glycosylation sites follow: asparagine 212, asparagine 232, and asparagine 237. The interval 220 to 260 (TQDHASFSPSQPNVTHSNHTHHDEDTPTHQHDDHDEHEHAR) is disordered. Residues 222–236 (DHASFSPSQPNVTHS) show a composition bias toward polar residues. Positions 239–260 (THHDEDTPTHQHDDHDEHEHAR) are enriched in basic and acidic residues. Asparagine 267 and asparagine 337 each carry an N-linked (GlcNAc...) asparagine glycan. Residues 310 to 342 (EDEHSDHSHHHKHHHHHHDHQHLQHPHNHTNGR) are disordered. A compositionally biased stretch (basic residues) spans 316–339 (HSHHHKHHHHHHDHQHLQHPHNHT). A helical transmembrane segment spans residues 354–374 (LGGFLSITLISLLALVGVVLI). Over 375-385 (PLMNRVCFNFL) the chain is Cytoplasmic. Residues 386-406 (LSFLVALAVGTLSGDALLHLI) form a helical membrane-spanning segment. The Extracellular segment spans residues 407–430 (PHSQGHHHHGHSEEHAEEEDSLRP). Residues 431–451 (VWTGLTALSGVYIMFLIEHFL) traverse the membrane as a helical segment. At 452 to 644 (TLGKMYKDKN…LKAGMSVRQA (193 aa)) the chain is on the cytoplasmic side. The helical transmembrane segment at 645-665 (MLYNLLSALMGYLGMIIGILI) threads the bilayer. Residues 666-671 (GHYAEN) lie on the Extracellular side of the membrane. Residues 672-692 (VATWIFALTAGLFMYVALVDM) traverse the membrane as a helical segment. Topologically, residues 693–710 (VPEMLHNDASEAGFSHYG) are cytoplasmic. A helical membrane pass occupies residues 711–731 (FFLLQNAGILLGFGIMLIIAV). Residues 732–742 (FEDRIQLDLGY) lie on the Extracellular side of the membrane.

Belongs to the ZIP transporter (TC 2.A.5) family. In terms of processing, cleaved on the N-terminus before locating to the plasma membrane. N-glycosylated.

It is found in the cell membrane. It carries out the reaction Zn(2+)(in) = Zn(2+)(out). Acts as a zinc-influx transporter which plays a role in zinc homeostasis and in the induction of epithelial-to-mesenchymal transition (EMT). The chain is Zinc transporter ZIP6 from Danio rerio (Zebrafish).